Reading from the N-terminus, the 147-residue chain is RxLR effector protein Avr3a (147 aa).

An N-terminal signal peptide occupies residues 1–21; that stretch reads MRLAIMLSATAVAINFATSSA. The short motif at 44-59 is the RxLR-dEER element; it reads RLLRKNEENEETSEER. Lysine 48 is subject to N6-acetyllysine. The interval 77 to 147 is effector domain; that stretch reads ALTERADAKK…YMMHLGLTGY (71 aa).

This sequence belongs to the RxLR effector family. As to quaternary structure, forms homodimers via the RxLR-dEER motif. Interacts with host E3 ligase CMPG1. Interacts with host DRP2. In terms of processing, proteolytically cleaved. The cleavage site directly after the RxLR sequence and the high conservation among other effector proteins suggest that the RxLR motif might play a crucial role in the intracellular processing before secretion. Post-translationally, glycosylated. N-acetylated at Lys-48 after cleavage.

The protein localises to the secreted. It is found in the host cytoplasm. Multifunctional effector that can suppress host BAK1/SERK3-mediated immunity through at least two different pathways. Manipulates plant immunity by targeting and stabilizing host E3 ligase CMPG1. Preventing the normal 26S proteasome-dependent degradation of potato CMPG1, and thus potentially of its protein substrates in the host cell, further abolishes host cell death during the biotrophic phase of infection. Also associates with and affects the function of the dynamin-related protein 2 (DRP2), a plant GTPase involved in immune receptor-mediated endocytosis. The Avr3a(EM) form evades recognition by R3a, thus does not trigger R3a-mediated hypersensitivity and does not suppress INF1-induced cell death. This chain is RxLR effector protein Avr3a, found in Phytophthora infestans (Potato late blight agent).